Consider the following 356-residue polypeptide: Putative transposase y4zB (356 aa).

Positions 1 to 19 (MITTGTPTTRRSAAGTAGA) are enriched in low complexity. Disordered regions lie at residues 1–54 (MITT…PLAD) and 334–356 (PPPVNPSHRRPRCSPHQMSFAYV).

This sequence belongs to the transposase 11 family.

The polypeptide is Putative transposase y4zB (Sinorhizobium fredii (strain NBRC 101917 / NGR234)).